Here is a 239-residue protein sequence, read N- to C-terminus: Ribonuclease 3 (239 aa).

One can recognise an RNase III domain in the interval 12-137 (RAKLEALIGH…LIAAIYLDGG (126 aa)). Glu-50 lines the Mg(2+) pocket. Asp-54 is an active-site residue. Residues Asp-123 and Glu-126 each coordinate Mg(2+). Glu-126 is an active-site residue. One can recognise a DRBM domain in the interval 162–231 (DAKTELQEWS…ATKMLEREGI (70 aa)).

It belongs to the ribonuclease III family. Homodimer. It depends on Mg(2+) as a cofactor.

The protein localises to the cytoplasm. The enzyme catalyses Endonucleolytic cleavage to 5'-phosphomonoester.. Digests double-stranded RNA. Involved in the processing of primary rRNA transcript to yield the immediate precursors to the large and small rRNAs (23S and 16S). Processes some mRNAs, and tRNAs when they are encoded in the rRNA operon. Processes pre-crRNA and tracrRNA of type II CRISPR loci if present in the organism. In Rhizobium etli (strain ATCC 51251 / DSM 11541 / JCM 21823 / NBRC 15573 / CFN 42), this protein is Ribonuclease 3.